Consider the following 819-residue polypeptide: Cadherin-24 (819 aa).

The N-terminal stretch at 1–19 (MWGLVRLLLAWLGGWGCMG) is a signal peptide. A propeptide spanning residues 21–44 (LAAPARAWAGSREHPGPALLRTRR) is cleaved from the precursor. Residues 45 to 641 (SWVWNQFFVI…LSAAGLSTGA (597 aa)) lie on the Extracellular side of the membrane. Cadherin domains follow at residues 46–150 (WVWN…PPIF), 151–259 (PLGP…PPKF), 260–374 (PQSL…PPAF), 375–517 (TQAA…APQL), and 517–630 (LAEP…WPEA). N-linked (GlcNAc...) asparagine glycans are attached at residues N446, N548, and N563. A helical transmembrane segment spans residues 642-662 (LLAIITCVGALLALVVLFVAL). The Cytoplasmic portion of the chain corresponds to 663–819 (RRQKQEALMV…LYGAKEPPAP (157 aa)). Residues 768–800 (YEGRGSSCGSLSSLGSGSEAGGAPGPAEPLDDW) form a disordered region. Over residues 771-784 (RGSSCGSLSSLGSG) the composition is skewed to low complexity.

In terms of assembly, associates with alpha-, beta- and delta-catenins.

The protein resides in the cell membrane. Functionally, cadherins are calcium-dependent cell adhesion proteins. They preferentially interact with themselves in a homophilic manner in connecting cells; cadherins may thus contribute to the sorting of heterogeneous cell types. Cadherin-24 mediate strong cell-cell adhesion. In Homo sapiens (Human), this protein is Cadherin-24 (CDH24).